The sequence spans 189 residues: Methylated-DNA--protein-cysteine methyltransferase (189 aa).

DNA contacts are provided by tyrosine 128 and arginine 142. The Nucleophile; methyl group acceptor role is filled by cysteine 159. Serine 165 is a binding site for DNA.

This sequence belongs to the MGMT family.

It localises to the nucleus. It carries out the reaction a 6-O-methyl-2'-deoxyguanosine in DNA + L-cysteinyl-[protein] = S-methyl-L-cysteinyl-[protein] + a 2'-deoxyguanosine in DNA. The catalysed reaction is a 4-O-methyl-thymidine in DNA + L-cysteinyl-[protein] = a thymidine in DNA + S-methyl-L-cysteinyl-[protein]. Functionally, involved in the cellular defense against the biological effects of O6-methylguanine (O6-MeG) and O4-methylthymine (O4-MeT) in DNA. Repairs the methylated nucleobase in DNA by stoichiometrically transferring the methyl group to a cysteine residue in the enzyme. This is a suicide reaction: the enzyme is irreversibly inactivated. The chain is Methylated-DNA--protein-cysteine methyltransferase (MGT1) from Kluyveromyces lactis (strain ATCC 8585 / CBS 2359 / DSM 70799 / NBRC 1267 / NRRL Y-1140 / WM37) (Yeast).